Reading from the N-terminus, the 259-residue chain is Imidazole glycerol phosphate synthase subunit HisF (259 aa).

Active-site residues include Asp-11 and Asp-130.

Belongs to the HisA/HisF family. Heterodimer of HisH and HisF.

The protein resides in the cytoplasm. The enzyme catalyses 5-[(5-phospho-1-deoxy-D-ribulos-1-ylimino)methylamino]-1-(5-phospho-beta-D-ribosyl)imidazole-4-carboxamide + L-glutamine = D-erythro-1-(imidazol-4-yl)glycerol 3-phosphate + 5-amino-1-(5-phospho-beta-D-ribosyl)imidazole-4-carboxamide + L-glutamate + H(+). The protein operates within amino-acid biosynthesis; L-histidine biosynthesis; L-histidine from 5-phospho-alpha-D-ribose 1-diphosphate: step 5/9. In terms of biological role, IGPS catalyzes the conversion of PRFAR and glutamine to IGP, AICAR and glutamate. The HisF subunit catalyzes the cyclization activity that produces IGP and AICAR from PRFAR using the ammonia provided by the HisH subunit. The polypeptide is Imidazole glycerol phosphate synthase subunit HisF (Polaromonas sp. (strain JS666 / ATCC BAA-500)).